Consider the following 101-residue polypeptide: Large ribosomal subunit protein bL28 (101 aa).

This sequence belongs to the bacterial ribosomal protein bL28 family.

This Methylorubrum populi (strain ATCC BAA-705 / NCIMB 13946 / BJ001) (Methylobacterium populi) protein is Large ribosomal subunit protein bL28.